Reading from the N-terminus, the 61-residue chain is Small ribosomal subunit protein uS14 (61 aa).

The Zn(2+) site is built by cysteine 24, cysteine 27, cysteine 40, and cysteine 43.

The protein belongs to the universal ribosomal protein uS14 family. Zinc-binding uS14 subfamily. In terms of assembly, part of the 30S ribosomal subunit. Contacts proteins S3 and S10. The cofactor is Zn(2+).

Binds 16S rRNA, required for the assembly of 30S particles and may also be responsible for determining the conformation of the 16S rRNA at the A site. The chain is Small ribosomal subunit protein uS14 from Geotalea uraniireducens (strain Rf4) (Geobacter uraniireducens).